Consider the following 265-residue polypeptide: Phosphatidylglycerol--prolipoprotein diacylglyceryl transferase (265 aa).

The next 7 helical transmembrane spans lie at 11-31 (AVSI…FGFI), 56-76 (MVTW…ILFY), 91-111 (IWHG…AVWL), 120-140 (FLSV…FGRI), 173-193 (QLYE…WFSG), 198-218 (VGAV…AVEF), and 233-253 (WLTM…WLLL). Arginine 139 contacts a 1,2-diacyl-sn-glycero-3-phospho-(1'-sn-glycerol).

Belongs to the Lgt family.

It is found in the cell inner membrane. The enzyme catalyses L-cysteinyl-[prolipoprotein] + a 1,2-diacyl-sn-glycero-3-phospho-(1'-sn-glycerol) = an S-1,2-diacyl-sn-glyceryl-L-cysteinyl-[prolipoprotein] + sn-glycerol 1-phosphate + H(+). Its pathway is protein modification; lipoprotein biosynthesis (diacylglyceryl transfer). Its function is as follows. Catalyzes the transfer of the diacylglyceryl group from phosphatidylglycerol to the sulfhydryl group of the N-terminal cysteine of a prolipoprotein, the first step in the formation of mature lipoproteins. The chain is Phosphatidylglycerol--prolipoprotein diacylglyceryl transferase from Nitratidesulfovibrio vulgaris (strain DSM 19637 / Miyazaki F) (Desulfovibrio vulgaris).